The chain runs to 229 residues: MIRAIVTDIEGTTTDIRFVHNVLFPYARERLERFIRSGEQREPVNLLLNELRGEIHAPAASVDQLIETLFKFMDEDRKSPALKSIQGYIWREGYVNGDFTGHLYPDVVPALRRWSDQDIDIYIYSSGSVPAQKLLFSHSDEGDVTELLSGFFDTHVGAKRQVSSYRNISMKTGVPVHQMLFLSDIREELDAAREAGWKTVQLIRGEPDTQSTHRQVSSFDDIHPEQIPT.

The segment covering 208–218 has biased composition (polar residues); it reads DTQSTHRQVSS. The disordered stretch occupies residues 208–229; that stretch reads DTQSTHRQVSSFDDIHPEQIPT. Positions 220–229 are enriched in basic and acidic residues; it reads DDIHPEQIPT.

Belongs to the HAD-like hydrolase superfamily. MasA/MtnC family. Monomer. The cofactor is Mg(2+).

It catalyses the reaction 5-methylsulfanyl-2,3-dioxopentyl phosphate + H2O = 1,2-dihydroxy-5-(methylsulfanyl)pent-1-en-3-one + phosphate. Its pathway is amino-acid biosynthesis; L-methionine biosynthesis via salvage pathway; L-methionine from S-methyl-5-thio-alpha-D-ribose 1-phosphate: step 3/6. It functions in the pathway amino-acid biosynthesis; L-methionine biosynthesis via salvage pathway; L-methionine from S-methyl-5-thio-alpha-D-ribose 1-phosphate: step 4/6. Bifunctional enzyme that catalyzes the enolization of 2,3-diketo-5-methylthiopentyl-1-phosphate (DK-MTP-1-P) into the intermediate 2-hydroxy-3-keto-5-methylthiopentenyl-1-phosphate (HK-MTPenyl-1-P), which is then dephosphorylated to form the acireductone 1,2-dihydroxy-3-keto-5-methylthiopentene (DHK-MTPene). This is Enolase-phosphatase E1 from Cronobacter sakazakii (Enterobacter sakazakii).